Consider the following 216-residue polypeptide: MQKFTLHKGLVAPMDRENVDTDAIIPKQFLKSIKKTGFGPNLFDEWRYLDKGEPGVPESQRKPNPDFVLNQPRYQGASILLARKNFGCGSSREHAPWALDQYGFRAIIAPSFADIFFNNCFKNGLLPIVLPEATVDQLFNEAAAFPGYQLTVDLERQVVVRPQGEEIPFDVVPFRKYCLLNGFDDIGLTLRHADKIRAFEAARLASKPWLSHTMAA.

This sequence belongs to the LeuD family. LeuD type 1 subfamily. As to quaternary structure, heterodimer of LeuC and LeuD.

The catalysed reaction is (2R,3S)-3-isopropylmalate = (2S)-2-isopropylmalate. It participates in amino-acid biosynthesis; L-leucine biosynthesis; L-leucine from 3-methyl-2-oxobutanoate: step 2/4. Catalyzes the isomerization between 2-isopropylmalate and 3-isopropylmalate, via the formation of 2-isopropylmaleate. In Acidovorax ebreus (strain TPSY) (Diaphorobacter sp. (strain TPSY)), this protein is 3-isopropylmalate dehydratase small subunit.